A 545-amino-acid polypeptide reads, in one-letter code: Probable target of rapamycin complex 2 subunit BIT2 (545 aa).

Disordered regions lie at residues 1 to 24 (MATD…PNIK) and 78 to 166 (DGSN…GTSS). Composition is skewed to polar residues over residues 11 to 24 (ATSG…PNIK), 106 to 130 (IGSS…SNSR), and 151 to 166 (RSGS…GTSS).

In terms of assembly, interacts with the target of rapamycin complex 2 (TORC2) subunit TSC11 and the TORC2 effectors SLM1 and SLM2.

The polypeptide is Probable target of rapamycin complex 2 subunit BIT2 (BIT2) (Saccharomyces cerevisiae (strain ATCC 204508 / S288c) (Baker's yeast)).